A 194-amino-acid chain; its full sequence is Glycerol-3-phosphate acyltransferase (194 aa).

The next 6 helical transmembrane spans lie at 3–23, 52–72, 80–100, 112–132, 135–155, and 162–182; these read AGLF…GLLL, VGIL…LLAW, MQAW…FLLF, VFLA…ILLV, WRYI…IIFF, and LLIA…SNIS.

The protein belongs to the PlsY family. In terms of assembly, probably interacts with PlsX.

It is found in the cell inner membrane. It catalyses the reaction an acyl phosphate + sn-glycerol 3-phosphate = a 1-acyl-sn-glycero-3-phosphate + phosphate. It functions in the pathway lipid metabolism; phospholipid metabolism. Functionally, catalyzes the transfer of an acyl group from acyl-phosphate (acyl-PO(4)) to glycerol-3-phosphate (G3P) to form lysophosphatidic acid (LPA). This enzyme utilizes acyl-phosphate as fatty acyl donor, but not acyl-CoA or acyl-ACP. The chain is Glycerol-3-phosphate acyltransferase from Trichlorobacter lovleyi (strain ATCC BAA-1151 / DSM 17278 / SZ) (Geobacter lovleyi).